The sequence spans 84 residues: Small ribosomal subunit protein bS16c (84 aa).

It belongs to the bacterial ribosomal protein bS16 family.

It is found in the plastid. It localises to the chloroplast. In Mesostigma viride (Green alga), this protein is Small ribosomal subunit protein bS16c.